Consider the following 528-residue polypeptide: Peptide chain release factor 3 (528 aa).

In terms of domain architecture, tr-type G spans 9–280 (RRRRTFAIIS…LKLAPAPAPR (272 aa)). GTP contacts are provided by residues 18 to 25 (SHPDAGKT), 86 to 90 (DTPGH), and 140 to 143 (NKLD).

Belongs to the TRAFAC class translation factor GTPase superfamily. Classic translation factor GTPase family. PrfC subfamily.

Its subcellular location is the cytoplasm. In terms of biological role, increases the formation of ribosomal termination complexes and stimulates activities of RF-1 and RF-2. It binds guanine nucleotides and has strong preference for UGA stop codons. It may interact directly with the ribosome. The stimulation of RF-1 and RF-2 is significantly reduced by GTP and GDP, but not by GMP. This chain is Peptide chain release factor 3, found in Symbiobacterium thermophilum (strain DSM 24528 / JCM 14929 / IAM 14863 / T).